Reading from the N-terminus, the 326-residue chain is Chitinase 12 (326 aa).

An N-terminal signal peptide occupies residues 1 to 21; it reads MRALAVVAMVATAFLAAAVHA. Residues 22–62 form the Chitin-binding type-1 domain; it reads EQCGSQAGGAVCPNCLCCSQFGWCGSTSDYCGAGCQSQCSA. 8 disulfide bridges follow: Cys24–Cys39, Cys33–Cys45, Cys36–Cys65, Cys38–Cys52, Cys56–Cys60, Cys102–Cys165, Cys179–Cys187, and Cys286–Cys318. Residue Glu147 is the Proton donor of the active site.

Belongs to the glycosyl hydrolase 19 family. Chitinase class I subfamily. Expressed in meristems and at lower levels in roots and sheaths.

It catalyses the reaction Random endo-hydrolysis of N-acetyl-beta-D-glucosaminide (1-&gt;4)-beta-linkages in chitin and chitodextrins.. In terms of biological role, hydrolyzes chitin and plays a role in defense against fungal pathogens containing chitin. Its overexpression confers enhanced resistance to sheath blight pathogen (R.solani). In Oryza sativa subsp. japonica (Rice), this protein is Chitinase 12 (Cht12).